We begin with the raw amino-acid sequence, 192 residues long: Glycerol-3-phosphate acyltransferase (192 aa).

Helical transmembrane passes span 4–24, 54–74, 80–100, 112–132, and 154–174; these read MFWLLATFAYLLGSLSFAILL, LAVLTLLGDLCKGLIPVVLAG, PSQQGWIGVCAVLGHLFPLYF, AGVLLGLYPPAAALAIAAWLL, and LLAWQEPHALLPMSVLTLLIV.

This sequence belongs to the PlsY family. In terms of assembly, probably interacts with PlsX.

Its subcellular location is the cell inner membrane. The enzyme catalyses an acyl phosphate + sn-glycerol 3-phosphate = a 1-acyl-sn-glycero-3-phosphate + phosphate. Its pathway is lipid metabolism; phospholipid metabolism. In terms of biological role, catalyzes the transfer of an acyl group from acyl-phosphate (acyl-PO(4)) to glycerol-3-phosphate (G3P) to form lysophosphatidic acid (LPA). This enzyme utilizes acyl-phosphate as fatty acyl donor, but not acyl-CoA or acyl-ACP. The polypeptide is Glycerol-3-phosphate acyltransferase (Pseudomonas syringae pv. tomato (strain ATCC BAA-871 / DC3000)).